The following is a 329-amino-acid chain: Deoxynucleotidyltransferase terminal-interacting protein 1 (329 aa).

Disordered stretches follow at residues 1–22 and 147–178; these read MGAT…GGLE and KRGR…ILSS. Residues 56-147 form an important for dimerization region; the sequence is MTTSFTDPAI…RLTHELPGIK (92 aa). Basic and acidic residues predominate over residues 147 to 158; it reads KRGRQAEEECAH. The segment at residues 159–173 is a DNA-binding region (a.T hook); sequence RGSPLPKKRKGRPPG. Ser161 bears the Phosphoserine mark. The Nuclear localization signal signature appears at 164-170; the sequence is PKKRKGR. Residues 197–316 form an important for DNA and nucleosome binding region; that stretch reads REGPKWDPAR…MRKYMETLRT (120 aa). The segment at residues 216-237 is a DNA-binding region (H-T-H motif); sequence GSRANKALGMGGTRGRIYIKHP.

In terms of assembly, monomer and homodimer. A minor proportion may form homotrimers. Interacts with ZNF541. Interacts with the terminal deoxynucleotidyltransferase DNTT. Interacts with TRERF1. Identified in a histone deacetylase complex that contains DNTTIP1, HDAC1 and MIDEAS; this complex assembles into a tetramer that contains four copies of each protein chain. Component of a histone deacetylase complex containing DNTTIP1, ZNF541, HDAC1 and HDAC2. Identified in a complex with KCTD19, HDAC1, HDAC2 and ZNF541.

It is found in the nucleus. Its function is as follows. Increases DNTT terminal deoxynucleotidyltransferase activity (in vitro). Also acts as a transcriptional regulator, binding to the consensus sequence 5'-GNTGCATG-3' following an AT-tract. Associates with RAB20 promoter and positively regulates its transcription. Binds DNA and nucleosomes; may recruit HDAC1 complexes to nucleosomes or naked DNA. This is Deoxynucleotidyltransferase terminal-interacting protein 1 (DNTTIP1) from Pongo abelii (Sumatran orangutan).